We begin with the raw amino-acid sequence, 394 residues long: Nuclear hormone receptor family member nhr-103 (394 aa).

Positions 8 to 83 (SGPCEICGQK…VGMDSKKFQT (76 aa)) form a DNA-binding region, nuclear receptor. The segment at 11–31 (CEICGQKTSGRHFGVLSCRSC) adopts an NR C4-type zinc-finger fold. The segment at 47-66 (QCVKGTCKIFEDGKFNCKQC) adopts an NR C4-type; degenerate zinc-finger fold. The NR LBD domain maps to 126-394 (YLVDMAKNLL…FSHPEMFETT (269 aa)).

Belongs to the nuclear hormone receptor family.

It localises to the nucleus. Orphan nuclear receptor. This is Nuclear hormone receptor family member nhr-103 (nhr-103) from Caenorhabditis elegans.